Reading from the N-terminus, the 169-residue chain is Nucleoside-triphosphatase THEP1 (169 aa).

Residues 11–18 and 100–107 each bind ATP; these read GEPGVGKT and IIGIDEIG.

This sequence belongs to the THEP1 NTPase family.

It catalyses the reaction a ribonucleoside 5'-triphosphate + H2O = a ribonucleoside 5'-diphosphate + phosphate + H(+). In terms of biological role, has nucleotide phosphatase activity towards ATP, GTP, CTP, TTP and UTP. May hydrolyze nucleoside diphosphates with lower efficiency. The chain is Nucleoside-triphosphatase THEP1 from Sulfurisphaera tokodaii (strain DSM 16993 / JCM 10545 / NBRC 100140 / 7) (Sulfolobus tokodaii).